A 66-amino-acid polypeptide reads, in one-letter code: UPF0370 protein CKO_00315 (66 aa).

Residues 4–24 form a helical membrane-spanning segment; the sequence is LAKYWWILVLVFLVGVLINVI. The segment at 39 to 66 is disordered; that stretch reads KPELPPHRDFNDKWDDDDDWPKKDQPKK. A compositionally biased stretch (basic and acidic residues) spans 42-51; the sequence is LPPHRDFNDK.

It belongs to the UPF0370 family.

It localises to the cell membrane. This Citrobacter koseri (strain ATCC BAA-895 / CDC 4225-83 / SGSC4696) protein is UPF0370 protein CKO_00315.